A 102-amino-acid chain; its full sequence is Acid shock protein (102 aa).

Residues 1–21 (MKKVLALVVAAAMGLSSAAFA) form the signal peptide. Positions 22 to 41 (AETATTPAPTATTTKAAPAK) are enriched in low complexity. Positions 22 to 58 (AETATTPAPTATTTKAAPAKTTHHKKQHKAAPAQKAQ) are excised as a propeptide. The segment at 22-102 (AETATTPAPT…PAKPAAQPAA (81 aa)) is disordered. Residues 80–90 (AAKKHAKKHSH) show a composition bias toward basic residues. A compositionally biased stretch (low complexity) spans 91–102 (QQPAKPAAQPAA).

Belongs to the Asr family. In terms of processing, proteolytic processing gives rise to the active protein.

It is found in the periplasm. Functionally, required for growth and/or survival at acidic conditions. In Escherichia coli O17:K52:H18 (strain UMN026 / ExPEC), this protein is Acid shock protein.